The chain runs to 81 residues: ATP synthase subunit C, cyanelle (81 aa).

2 consecutive transmembrane segments (helical) span residues 7–27 (AASVIAAALAVGLAAIGPGIG) and 57–77 (LAFMEALTIYGLVVALALLFA).

The protein belongs to the ATPase C chain family. As to quaternary structure, F-type ATPases have 2 components, F(1) - the catalytic core - and F(0) - the membrane proton channel. F(1) has five subunits: alpha(3), beta(3), gamma(1), delta(1), epsilon(1). F(0) has four main subunits: a(1), b(1), b'(1) and c(10-14). The alpha and beta chains form an alternating ring which encloses part of the gamma chain. F(1) is attached to F(0) by a central stalk formed by the gamma and epsilon chains, while a peripheral stalk is formed by the delta, b and b' chains.

The protein localises to the plastid. Its subcellular location is the cyanelle thylakoid membrane. F(1)F(0) ATP synthase produces ATP from ADP in the presence of a proton or sodium gradient. F-type ATPases consist of two structural domains, F(1) containing the extramembraneous catalytic core and F(0) containing the membrane proton channel, linked together by a central stalk and a peripheral stalk. During catalysis, ATP synthesis in the catalytic domain of F(1) is coupled via a rotary mechanism of the central stalk subunits to proton translocation. Its function is as follows. Key component of the F(0) channel; it plays a direct role in translocation across the membrane. A homomeric c-ring of between 10-14 subunits forms the central stalk rotor element with the F(1) delta and epsilon subunits. In Cyanophora paradoxa, this protein is ATP synthase subunit C, cyanelle.